A 104-amino-acid polypeptide reads, in one-letter code: Large ribosomal subunit protein bL21 (104 aa).

It belongs to the bacterial ribosomal protein bL21 family. In terms of assembly, part of the 50S ribosomal subunit. Contacts protein L20.

Its function is as follows. This protein binds to 23S rRNA in the presence of protein L20. The polypeptide is Large ribosomal subunit protein bL21 (Agrobacterium fabrum (strain C58 / ATCC 33970) (Agrobacterium tumefaciens (strain C58))).